The chain runs to 295 residues: Nucleotide-binding protein llmg_1557 (295 aa).

12–19 (GMSGAGKT) lines the ATP pocket. Position 63–66 (63–66 (DMRS)) interacts with GTP.

The protein belongs to the RapZ-like family.

Its function is as follows. Displays ATPase and GTPase activities. The sequence is that of Nucleotide-binding protein llmg_1557 from Lactococcus lactis subsp. cremoris (strain MG1363).